The primary structure comprises 223 residues: UPF0758 protein Plut_0598 (223 aa).

The MPN domain maps to 100-222 (RVQGAKDVFE…WFSFRESNLL (123 aa)). Positions 171, 173, and 184 each coordinate Zn(2+). A JAMM motif motif is present at residues 171–184 (HNHPSGDTEPSNAD).

The protein belongs to the UPF0758 family.

The polypeptide is UPF0758 protein Plut_0598 (Chlorobium luteolum (strain DSM 273 / BCRC 81028 / 2530) (Pelodictyon luteolum)).